The primary structure comprises 428 residues: MILKNVYDVFMERGFIEQVTDENAVRKALEAPLACYIGFDPTARSLHIGSLVPIMALIHLQRHGHTSIALVGGGTALIGDPSGKTEMRQILTREKIELNATCMRRQFARYLSFEDKKAMMINNADWLTKLNYISFLRDIGRHFSVNKMLAAESYKMRLEKGLNFIEFNYMLLQAYDFLYLFQNHNCVMQMGGNDQWGNMLAGVDLIRRVEGKVAHSMTFPLLTTATGQKMGKTEKGAVWLDRELTSPYEYYQYWINTGDIDVGKFLALFTFLPMEEIHQVKSLSDKELNMAKAILAFEATKITHGEDAALAAWNASAVAFGVKLIDTSLMPSSTIPRGQLSQDASAIPFIKKSWNELAKGIPAYEIMHECGLCSSKSEARRLIAQGGGYVNENPIFAFDELITTEHLDRSGQIKLRKGKKKYMIIKVE.

Position 36 (Tyr-36) interacts with L-tyrosine. A 'HIGH' region motif is present at residues 41–50; the sequence is PTARSLHIGS. 2 residues coordinate L-tyrosine: Tyr-169 and Gln-173. The short motif at 229–233 is the 'KMSKS' region element; sequence KMGKT. Lys-232 is a binding site for ATP. The 67-residue stretch at 361 to 427 folds into the S4 RNA-binding domain; it reads IPAYEIMHEC…GKKKYMIIKV (67 aa).

Belongs to the class-I aminoacyl-tRNA synthetase family. TyrS type 1 subfamily. Homodimer.

The protein resides in the cytoplasm. It catalyses the reaction tRNA(Tyr) + L-tyrosine + ATP = L-tyrosyl-tRNA(Tyr) + AMP + diphosphate + H(+). Catalyzes the attachment of tyrosine to tRNA(Tyr) in a two-step reaction: tyrosine is first activated by ATP to form Tyr-AMP and then transferred to the acceptor end of tRNA(Tyr). This is Tyrosine--tRNA ligase from Syntrophus aciditrophicus (strain SB).